The primary structure comprises 86 residues: Putative pro-MCH-like protein 1 (86 aa).

The tract at residues 31 to 49 (GSVAFPAENGVQDTESTQE) is NGE-like. Residues 38–62 (ENGVQDTESTQEKRETGDEENSAKF) form a disordered region. An NEI-like region spans residues 52–64 (ETGDEENSAKFPV). Residues 68–86 (DFDTLSCMLGRVYQSCWQV) are melanin-concentrating hormone-like.

It belongs to the melanin-concentrating hormone family. As to expression, expressed in testis and brain.

The chain is Putative pro-MCH-like protein 1 (PMCHL1) from Homo sapiens (Human).